A 411-amino-acid chain; its full sequence is Probable glutamate dehydrogenase 3 (411 aa).

Lys102 is a catalytic residue.

Belongs to the Glu/Leu/Phe/Val dehydrogenases family.

It catalyses the reaction L-glutamate + NAD(+) + H2O = 2-oxoglutarate + NH4(+) + NADH + H(+). The enzyme catalyses L-glutamate + NADP(+) + H2O = 2-oxoglutarate + NH4(+) + NADPH + H(+). This Arabidopsis thaliana (Mouse-ear cress) protein is Probable glutamate dehydrogenase 3 (GSH3).